Consider the following 1553-residue polypeptide: Sodium channel protein PaFPC1 (1553 aa).

The tract at residues 1–68 (MADNSPLIRE…SAHPDQALEQ (68 aa)) is disordered. Residues 1–140 (MADNSPLIRE…RVAISTMVQP (140 aa)) are Cytoplasmic-facing. Residues 34-60 (ENGKTEENKDNSRDKGRGANKDRDGSA) are compositionally biased toward basic and acidic residues. A helical transmembrane segment spans residues 141 to 159 (IFSYFIMITILIHCIFMIM). The Extracellular portion of the chain corresponds to 160–165 (PATQTT). A helical membrane pass occupies residues 166 to 186 (YILELVFLSIYTIEVVVKVLA). Residues 187–200 (RGFILHPFAYLRDP) are Cytoplasmic-facing. A helical membrane pass occupies residues 201–218 (WNWLDFLVTLIGYITLVV). Over 219–224 (DLGHLY) the chain is Extracellular. Residues 225–241 (ALRAFRVLRSWRTVTIV) traverse the membrane as a helical segment. The Cytoplasmic portion of the chain corresponds to 242 to 260 (PGWRTIVDALSLSITSLKD). The chain crosses the membrane as a helical span at residues 261 to 280 (LVLLLLFSLFVFAVLGLQIY). Over 281 to 360 (MGVLTQKCVK…PNYGYTSFDT (80 aa)) the chain is Extracellular. Disulfide bonds link cysteine 288–cysteine 337 and cysteine 328–cysteine 343. Asparagine 300, asparagine 308, asparagine 312, and asparagine 330 each carry an N-linked (GlcNAc...) asparagine glycan. Positions 361–385 (FGWAFLSVFRLVTLDYWEDLYQLAL) form an intramembrane region, pore-forming. Residue glutamate 378 participates in saxitoxin binding. At 386-392 (RSAGPWH) the chain is on the extracellular side. Residues 393–413 (ILFFIIVVFYGTFCFLNFILA) traverse the membrane as a helical segment. The Cytoplasmic portion of the chain corresponds to 414–519 (VVVMSYTHMV…GAIGAVVLSP (106 aa)). Residues 520 to 538 (FFELFIAVIIVLNITFMAL) traverse the membrane as a helical segment. Residues 539–549 (DHHDMNIEFER) lie on the Extracellular side of the membrane. A helical membrane pass occupies residues 550 to 569 (ILRTGNYIFTSIYIVEAVLK). Topologically, residues 570–583 (IIALSPKFYFKDSW) are cytoplasmic. A helical membrane pass occupies residues 584–603 (NVFDFIIVVFAILELGLEGV). The Extracellular portion of the chain corresponds to 604–605 (QG). The chain crosses the membrane as a helical span at residues 606-623 (LSVFRSFRLLRVFRLAKF). Over 624 to 639 (WPTLNNFMSVMTKSYG) the chain is Cytoplasmic. Residues 640 to 658 (AFVNVMYVMFLLLFIFAII) form a helical membrane-spanning segment. Residues 659 to 686 (GMQLFGMNYIDNMERFPDGDLPRWNFTD) are Extracellular-facing. Asparagine 683 is a glycosylation site (N-linked (GlcNAc...) asparagine). Residues 687–707 (FLHSFMIVFRALCGEWIESMW) constitute an intramembrane region (pore-forming). 2 residues coordinate tetrodotoxin: glutamate 701 and glutamate 704. Saxitoxin is bound at residue glutamate 704. Residues 708-719 (DCMLVGDWSCIP) lie on the Extracellular side of the membrane. Residues cysteine 709 and cysteine 717 are joined by a disulfide bond. A helical membrane pass occupies residues 720-740 (FFVAVFFVGNLVILNLLIALL). Residues 741–857 (LNNYGSFCTS…VCFLLAKNKY (117 aa)) are Cytoplasmic-facing. A helical membrane pass occupies residues 858–875 (FQKFVTAVLVITSVLLAL). Residues 876–888 (EDIYLPQRPVLVN) are Extracellular-facing. A helical transmembrane segment spans residues 889 to 907 (ITLYVDYVLTAFFVIEMII). Over 908-921 (MLFAVGFKKYFTSK) the chain is Cytoplasmic. A helical membrane pass occupies residues 922–940 (WYWLDFIVVVAYLLNFVLM). Topologically, residues 941 to 945 (CAGIE) are extracellular. The chain crosses the membrane as a helical span at residues 946–964 (ALQTLRLLRVFRLFRPLSK). Residues 965 to 981 (VNGMQVVTSTLVEAVPH) lie on the Cytoplasmic side of the membrane. A helical transmembrane segment spans residues 982–1001 (IFNVILVGIFFWLVFAIMGV). The Extracellular portion of the chain corresponds to 1002 to 1047 (QLFAGKFYKCVDENSTVLSHEITMDRNDCLHENYTWENSPMNFDHV). Cysteine 1011 and cysteine 1030 form a disulfide bridge. Asparagine 1015 carries an N-linked (GlcNAc...) asparagine glycan. Asparagine 1028 carries N-linked (GlcNAc...) asparagine; atypical glycosylation. Asparagine 1034 is a glycosylation site (N-linked (GlcNAc...) asparagine). Positions 1048–1069 (GNAYLSLLQVATFKGWLQIMND) form an intramembrane region, pore-forming. Glycine 1062 lines the tetrodotoxin pocket. Position 1063 (tryptophan 1063) interacts with saxitoxin. Over 1070 to 1086 (AIDSREVHKQPIRETNI) the chain is Extracellular. Residues 1087 to 1108 (YMYLYFIFFIVFGSFFILKLFV) form a helical membrane-spanning segment. Over 1109–1171 (CILIDIFRQQ…LMYDISVNRK (63 aa)) the chain is Cytoplasmic. The segment at 1133 to 1146 (QLIYRRAVMRTMSA) is linker region that may regulate channel inactivation. A helical membrane pass occupies residues 1172-1189 (FEYTMMILIILNVAVMAI). Topologically, residues 1190-1200 (DHYGQSMEFSE) are extracellular. A helical transmembrane segment spans residues 1201–1219 (VLDYLNLIFIIIFFVECVI). The Cytoplasmic portion of the chain corresponds to 1220–1231 (KVSGLRHHYFKD). Residues 1232–1249 (PWNIIDFLYVVLAIAGLM) form a helical membrane-spanning segment. The Extracellular segment spans residues 1250–1262 (LSDVIEKYFISPT). The helical transmembrane segment at 1263–1279 (LLRILRILRVGRLLRYF) threads the bilayer. The Cytoplasmic segment spans residues 1280–1298 (QSARGMRLLLLALRKALRT). The chain crosses the membrane as a helical span at residues 1299-1316 (LFNVSFLLFVIMFVYAVF). The Extracellular portion of the chain corresponds to 1317–1338 (GMEFFMHIRDAGAIDDVYNFKT). Positions 1339 to 1361 (FGQSIILLFQLATSAGWDGVYFA) form an intramembrane region, pore-forming. Glycine 1354 and aspartate 1356 together coordinate tetrodotoxin. Aspartate 1356 contributes to the saxitoxin binding site. Residues 1362–1387 (IANEEDCRAPDHELGYPGNCGSRALG) are Extracellular-facing. A disulfide bridge connects residues cysteine 1368 and cysteine 1381. A helical membrane pass occupies residues 1388–1410 (IAYLVSYLIITCLVVINMYAAVI). Topologically, residues 1411–1553 (LDYVLEVYED…NAWRKHKQQN (143 aa)) are cytoplasmic.

Belongs to the sodium channel (TC 1.A.1.10) family. Detected in adult nerve cord, muscle, gut and mushroom-shaped accessory glands.

The protein localises to the cell membrane. Its activity is regulated as follows. Inhibited by the pore blockers saxitoxin and tetrodotoxin. Mediates the voltage-dependent sodium ion permeability of excitable membranes. This Periplaneta americana (American cockroach) protein is Sodium channel protein PaFPC1.